Consider the following 1249-residue polypeptide: Pleckstrin homology-like domain family B member 2 (1249 aa).

2 disordered regions span residues 64–85 and 128–154; these read QPVS…SPSL and DHYT…SSRN. A phosphoserine mark is found at Ser71 and Ser73. Positions 74-84 are enriched in polar residues; the sequence is PMGTSVRSSPS. Residues 128–143 are compositionally biased toward basic and acidic residues; sequence DHYTGRDSERSTRLSE. Phosphoserine occurs at positions 156, 203, 241, and 244. 2 disordered regions span residues 190-248 and 264-289; these read SPIS…LSNM and NQMS…GEKD. A compositionally biased stretch (polar residues) spans 231–248; that stretch reads ENVSVRTRKYSGSSLSNM. Positions 267–283 are enriched in low complexity; it reads SPLSLPPRSSLGNSRRG. A phosphoserine mark is found at Ser329, Ser333, Ser347, Ser380, Ser383, Ser389, Ser411, Ser416, Ser465, Ser486, and Ser510. The segment at 388-424 is disordered; it reads DSDLESLRQSSETPQPVLRERKSSISSISGRDDLMDY. Residues Thr546 and Thr570 each carry the phosphothreonine modification. Coiled coils occupy residues 580-692 and 718-803; these read TQEL…LDNC and FEDL…LCNL. A disordered region spans residues 866–934; that stretch reads VSQPQSSEHF…LGQSNSCGSV (69 aa). Residues 873–888 are compositionally biased toward basic and acidic residues; sequence EHFRSLEERKKQHKEG. Thr894 is subject to Phosphothreonine. Over residues 901 to 919 the composition is skewed to polar residues; it reads TPSLSPHFSSATMGRSTTP. The stretch at 1028 to 1094 forms a coiled coil; sequence IARIEEMERL…QKLIEKEVKI (67 aa). Positions 1139 to 1242 constitute a PH domain; it reads EKTCRGYLIK…WMDVIVTGAE (104 aa).

In terms of assembly, interacts with FLNC. Interacts with AMOTL2; interaction may facilitate PHLDB2 localization to the myotube podosome cortex that surrounds the core. Part of a cortical microtubule stabilization complex (CMSC) composed of KANK1, PPFIA1, PPFIBP1, ERC1/ELKS, PHLDB2/LL5beta, CLASPs, KIF21A and possibly additional interactors; within CMSCs KANK1 and PHLDB2/LL5beta appear to be the core components for targeting of microtubule-binding proteins KIF21A and CLASPs, whereas PPFIA1, PPFIBP1 and ERC1/ELKS serve as scaffolds for protein clustering. Expressed at postsynaptic membranes of skeletal neuromuscular junctions (at protein level).

It localises to the cytoplasm. The protein resides in the membrane. The protein localises to the cell projection. It is found in the podosome. Its subcellular location is the cell cortex. Seems to be involved in the assembly of the postsynaptic apparatus. May play a role in acetyl-choline receptor (AChR) aggregation in the postsynaptic membrane. The protein is Pleckstrin homology-like domain family B member 2 (Phldb2) of Mus musculus (Mouse).